Consider the following 647-residue polypeptide: S-adenosyl-L-methionine-dependent tRNA 4-demethylwyosine synthase (647 aa).

A Flavodoxin-like domain is found at 50-198 (GKIFFISQTG…AFQDWCDGVI (149 aa)). FMN is bound by residues 56 to 60 (SQTGT) and 142 to 174 (VFGV…LEMI). The 244-residue stretch at 316-559 (YGIESHRCME…LSLKSNGEYE (244 aa)) folds into the Radical SAM core domain. [4Fe-4S] cluster contacts are provided by C332, C336, and C339.

It belongs to the TYW1 family. The cofactor is [4Fe-4S] cluster.

The enzyme catalyses N(1)-methylguanosine(37) in tRNA(Phe) + pyruvate + S-adenosyl-L-methionine = 4-demethylwyosine(37) in tRNA(Phe) + 5'-deoxyadenosine + L-methionine + CO2 + H2O. It functions in the pathway tRNA modification; wybutosine-tRNA(Phe) biosynthesis. Functionally, probable component of the wybutosine biosynthesis pathway. Wybutosine is a hyper modified guanosine with a tricyclic base found at the 3'-position adjacent to the anticodon of eukaryotic phenylalanine tRNA. Catalyzes the condensation of N-methylguanine with 2 carbon atoms from pyruvate to form the tricyclic 4-demethylwyosine, an intermediate in wybutosine biosynthesis. The polypeptide is S-adenosyl-L-methionine-dependent tRNA 4-demethylwyosine synthase (TYW1) (Arabidopsis thaliana (Mouse-ear cress)).